The following is a 117-amino-acid chain: MRVKGGTVTRARRKRIMKLAKGYTGSKHRLFKTAKDQVMKSYTYAFRDRKVNKRNFRELWIARINAGARMNGLSYSKLMHGLKLANIDINRKMLADLAVNDADAFKAVVDEAKKALN.

This sequence belongs to the bacterial ribosomal protein bL20 family.

In terms of biological role, binds directly to 23S ribosomal RNA and is necessary for the in vitro assembly process of the 50S ribosomal subunit. It is not involved in the protein synthesizing functions of that subunit. This chain is Large ribosomal subunit protein bL20, found in Limosilactobacillus fermentum (strain NBRC 3956 / LMG 18251) (Lactobacillus fermentum).